The primary structure comprises 179 residues: UPF0303 protein P4H10.12 (179 aa).

This sequence belongs to the UPF0303 family.

This chain is UPF0303 protein P4H10.12, found in Schizosaccharomyces pombe (strain 972 / ATCC 24843) (Fission yeast).